Reading from the N-terminus, the 507-residue chain is TOM1-like protein 2 (507 aa).

The 133-residue stretch at 20-152 (ATDGSLQSED…ELKRKGVEFP (133 aa)) folds into the VHS domain. Ser-160 bears the Phosphoserine mark. The tract at residues 162–210 (IHTPQRSVPEVDPAATMPRSQSQQRTSAGSYSSPPPAPYSAPQAPALSV) is disordered. Thr-164 carries the phosphothreonine modification. In terms of domain architecture, GAT spans 219–307 (EQIARLRSEL…VFLRYERFER (89 aa)). The short motif at 329–334 (NLIDLG) is the Clathrin-binding element. The disordered stretch occupies residues 467-507 (RAKAAEMVPDLPSPPMEAPAPASNPSGRKKPERSEDALFAL). A compositionally biased stretch (basic and acidic residues) spans 498 to 507 (ERSEDALFAL).

This sequence belongs to the TOM1 family. Interacts with clathrin, SRC and TOLLIP. Interacts with MYO6. In terms of tissue distribution, ubiquitously expressed with higher expression in heart and skeletal muscle.

Its function is as follows. Acts as a MYO6/Myosin VI adapter protein that targets myosin VI to endocytic structures. May also play a role in recruiting clathrin to endosomes. May regulate growth factor-induced mitogenic signaling. This chain is TOM1-like protein 2 (TOM1L2), found in Homo sapiens (Human).